We begin with the raw amino-acid sequence, 354 residues long: Protein Wnt-8a (354 aa).

The first 19 residues, 1-19 (MGHLLMLWVAAGMCYPALG), serve as a signal peptide directing secretion. C54 and C65 are oxidised to a cystine. The N-linked (GlcNAc...) asparagine glycan is linked to N103. 10 disulfides stabilise this stretch: C104–C112, C114–C132, C180–C194, C182–C189, C259–C297, C275–C290, C294–C336, C312–C327, C314–C324, and C319–C320. S186 carries the O-palmitoleoyl serine lipid modification. N262 carries N-linked (GlcNAc...) asparagine glycosylation.

This sequence belongs to the Wnt family. Forms a soluble 1:1 complex with AFM; this prevents oligomerization and is required for prolonged biological activity. The complex with AFM may represent the physiological form in body fluids. Post-translationally, palmitoleoylation is required for efficient binding to frizzled receptors. Depalmitoleoylation leads to Wnt signaling pathway inhibition. In terms of processing, proteolytic processing by TIKI1 and TIKI2 promotes oxidation and formation of large disulfide-bond oligomers, leading to inactivation of WNT8A.

It localises to the secreted. The protein resides in the extracellular space. It is found in the extracellular matrix. Ligand for members of the frizzled family of seven transmembrane receptors. Plays a role in embryonic patterning. This chain is Protein Wnt-8a (Wnt8a), found in Mus musculus (Mouse).